Consider the following 352-residue polypeptide: Biotin synthase (352 aa).

In terms of domain architecture, Radical SAM core spans 44-262 (NRVQVSTLLS…LAVARILMPK (219 aa)). Residues Cys59, Cys63, and Cys66 each coordinate [4Fe-4S] cluster. [2Fe-2S] cluster-binding residues include Cys103, Cys134, Cys194, and Arg266.

This sequence belongs to the radical SAM superfamily. Biotin synthase family. Homodimer. [4Fe-4S] cluster serves as cofactor. It depends on [2Fe-2S] cluster as a cofactor.

It catalyses the reaction (4R,5S)-dethiobiotin + (sulfur carrier)-SH + 2 reduced [2Fe-2S]-[ferredoxin] + 2 S-adenosyl-L-methionine = (sulfur carrier)-H + biotin + 2 5'-deoxyadenosine + 2 L-methionine + 2 oxidized [2Fe-2S]-[ferredoxin]. Its pathway is cofactor biosynthesis; biotin biosynthesis; biotin from 7,8-diaminononanoate: step 2/2. In terms of biological role, catalyzes the conversion of dethiobiotin (DTB) to biotin by the insertion of a sulfur atom into dethiobiotin via a radical-based mechanism. This chain is Biotin synthase, found in Pseudomonas putida (strain GB-1).